The chain runs to 311 residues: tRNA dimethylallyltransferase (311 aa).

Residue 9–16 (GPTAVGKT) participates in ATP binding. Residue 11–16 (TAVGKT) coordinates substrate. Positions 34–37 (DSMQ) are interaction with substrate tRNA.

It belongs to the IPP transferase family. As to quaternary structure, monomer. The cofactor is Mg(2+).

It carries out the reaction adenosine(37) in tRNA + dimethylallyl diphosphate = N(6)-dimethylallyladenosine(37) in tRNA + diphosphate. Catalyzes the transfer of a dimethylallyl group onto the adenine at position 37 in tRNAs that read codons beginning with uridine, leading to the formation of N6-(dimethylallyl)adenosine (i(6)A). In Clostridium botulinum (strain Loch Maree / Type A3), this protein is tRNA dimethylallyltransferase.